Consider the following 200-residue polypeptide: Recombination protein RecR (200 aa).

The C4-type zinc-finger motif lies at 58 to 75 (CPTCFCLKSHPESVCSFC). Residues 82 to 177 (SILCIVATPK…SVSRLALGLP (96 aa)) form the Toprim domain.

It belongs to the RecR family.

In terms of biological role, may play a role in DNA repair. It seems to be involved in an RecBC-independent recombinational process of DNA repair. It may act with RecF and RecO. The chain is Recombination protein RecR from Chlamydia abortus (strain DSM 27085 / S26/3) (Chlamydophila abortus).